Here is a 177-residue protein sequence, read N- to C-terminus: Thymidine kinase (177 aa).

11 to 18 (GPMFSGKS) contributes to the ATP binding site. E83 functions as the Proton acceptor in the catalytic mechanism. Residue F113 participates in substrate binding. Zn(2+) is bound by residues C138 and C141. Position 157 to 161 (157 to 161 (IELIG)) interacts with substrate. C170 and C173 together coordinate Zn(2+).

The protein belongs to the thymidine kinase family.

The enzyme catalyses thymidine + ATP = dTMP + ADP + H(+). This is Thymidine kinase (TK) from Sheeppox virus (strain KS-1) (SPPV).